The following is a 284-amino-acid chain: 2-dehydro-3-deoxyphosphooctonate aldolase (284 aa).

It belongs to the KdsA family.

Its subcellular location is the cytoplasm. The catalysed reaction is D-arabinose 5-phosphate + phosphoenolpyruvate + H2O = 3-deoxy-alpha-D-manno-2-octulosonate-8-phosphate + phosphate. The protein operates within carbohydrate biosynthesis; 3-deoxy-D-manno-octulosonate biosynthesis; 3-deoxy-D-manno-octulosonate from D-ribulose 5-phosphate: step 2/3. Its pathway is bacterial outer membrane biogenesis; lipopolysaccharide biosynthesis. This Histophilus somni (strain 129Pt) (Haemophilus somnus) protein is 2-dehydro-3-deoxyphosphooctonate aldolase.